The following is a 72-amino-acid chain: UPF0270 protein YheU (72 aa).

It belongs to the UPF0270 family.

This Escherichia fergusonii (strain ATCC 35469 / DSM 13698 / CCUG 18766 / IAM 14443 / JCM 21226 / LMG 7866 / NBRC 102419 / NCTC 12128 / CDC 0568-73) protein is UPF0270 protein YheU.